The chain runs to 100 residues: RxLR effector protein Avrblb2 (100 aa).

Positions 1–22 are cleaved as a signal peptide; it reads MRSFLYGVLAFAVLARSSAVAA. Residues 43-57 carry the RxLR-dEER motif; that stretch reads RSLRIEAQEVIQSGR. The Calmodulin-binding motif signature appears at 78–82; that stretch reads RPDIK.

Belongs to the RxLR effector family. In terms of assembly, interacts with the host papain-like cysteine protease C14. Interacts with the host calmodulin.

The protein resides in the secreted. It localises to the host cell membrane. In terms of biological role, secreted effector that acts as an elicitor of hypersensitive response (HR) specifically on plants carrying defense protein Rpi-blb2. Enhances P.infestans colonization of Nicotiana benthamiana leaves. Interacts with, and subsequently prevents secretion into the apoplast of the host papain-like cysteine protease C14, thus promoting virulence by interfering with the execution of host defenses. Associates with calmodulin at the host plasma membrane to interfere with plant defense-associated calcium signaling in hosts. In Phytophthora infestans (strain T30-4) (Potato late blight agent), this protein is RxLR effector protein Avrblb2.